An 840-amino-acid chain; its full sequence is Probable alpha-glucuronidase A (840 aa).

Positions 1–19 are cleaved as a signal peptide; sequence MWSGIPIFALLSSIGIAAA. 13 N-linked (GlcNAc...) asparagine glycosylation sites follow: asparagine 50, asparagine 149, asparagine 222, asparagine 262, asparagine 279, asparagine 310, asparagine 465, asparagine 527, asparagine 576, asparagine 610, asparagine 682, asparagine 723, and asparagine 732.

Belongs to the glycosyl hydrolase 67 family.

It localises to the secreted. The catalysed reaction is an alpha-D-glucuronoside + H2O = D-glucuronate + an alcohol. Functionally, alpha-glucuronidase involved in the hydrolysis of xylan, a major structural heterogeneous polysaccharide found in plant biomass representing the second most abundant polysaccharide in the biosphere, after cellulose. Releases 4-O-methylglucuronic acid from xylan. This Aspergillus fumigatus (strain ATCC MYA-4609 / CBS 101355 / FGSC A1100 / Af293) (Neosartorya fumigata) protein is Probable alpha-glucuronidase A (aguA).